Here is a 228-residue protein sequence, read N- to C-terminus: Pyridoxamine 5'-phosphate oxidase (228 aa).

20–23 provides a ligand contact to pyridoxal 5'-phosphate; it reads QYDK. Lysine 29 participates in a covalent cross-link: Glycyl lysine isopeptide (Lys-Gly) (interchain with G-Cter in ubiquitin). 73–76 is an FMN binding site; that stretch reads RILL. Lysine 78 is a pyridoxal 5'-phosphate binding site. FMN contacts are provided by residues 88–89, 95–96, and glutamine 118; these read YS and RK. The pyridoxal 5'-phosphate site is built by tyrosine 136, arginine 140, and serine 144. FMN contacts are provided by residues 153 to 154 and tryptophan 199; that span reads QS. 205 to 207 is a pyridoxal 5'-phosphate binding site; that stretch reads RLH. Residue arginine 209 participates in FMN binding.

The protein belongs to the pyridoxamine 5'-phosphate oxidase family. In terms of assembly, homodimer. It depends on FMN as a cofactor.

The protein resides in the mitochondrion intermembrane space. The enzyme catalyses pyridoxamine 5'-phosphate + O2 + H2O = pyridoxal 5'-phosphate + H2O2 + NH4(+). It carries out the reaction pyridoxine 5'-phosphate + O2 = pyridoxal 5'-phosphate + H2O2. The protein operates within cofactor metabolism; pyridoxal 5'-phosphate salvage; pyridoxal 5'-phosphate from pyridoxamine 5'-phosphate: step 1/1. Its pathway is cofactor metabolism; pyridoxal 5'-phosphate salvage; pyridoxal 5'-phosphate from pyridoxine 5'-phosphate: step 1/1. In terms of biological role, catalyzes the oxidation of either pyridoxine 5'-phosphate (PNP) or pyridoxamine 5'-phosphate (PMP) into pyridoxal 5'-phosphate (PLP). The polypeptide is Pyridoxamine 5'-phosphate oxidase (PDX3) (Saccharomyces cerevisiae (strain ATCC 204508 / S288c) (Baker's yeast)).